Here is a 138-residue protein sequence, read N- to C-terminus: ATP synthase epsilon chain (138 aa).

This sequence belongs to the ATPase epsilon chain family. As to quaternary structure, F-type ATPases have 2 components, CF(1) - the catalytic core - and CF(0) - the membrane proton channel. CF(1) has five subunits: alpha(3), beta(3), gamma(1), delta(1), epsilon(1). CF(0) has four main subunits: a(1), b(1), b'(1) and c(9-12).

Its subcellular location is the cellular thylakoid membrane. Its function is as follows. Produces ATP from ADP in the presence of a proton gradient across the membrane. In terms of biological role, the complex from the organism is particularly stable to disruption and remains functional after 6 hours at 55 degrees Celsius. The polypeptide is ATP synthase epsilon chain (Thermosynechococcus vestitus (strain NIES-2133 / IAM M-273 / BP-1)).